The primary structure comprises 646 residues: Phosphomethylpyrimidine synthase (646 aa).

Residues 1-13 (MNIRSNPDTTRPA) show a composition bias toward polar residues. Residues 1 to 21 (MNIRSNPDTTRPAVTTGGLPS) are disordered. Residues asparagine 221, methionine 250, tyrosine 279, histidine 315, 335 to 337 (SRG), 376 to 379 (DGLR), and glutamate 415 contribute to the substrate site. Position 419 (histidine 419) interacts with Zn(2+). Position 442 (tyrosine 442) interacts with substrate. Histidine 483 contacts Zn(2+). Residues cysteine 563, cysteine 566, and cysteine 571 each contribute to the [4Fe-4S] cluster site.

Belongs to the ThiC family. As to quaternary structure, homodimer. It depends on [4Fe-4S] cluster as a cofactor.

The catalysed reaction is 5-amino-1-(5-phospho-beta-D-ribosyl)imidazole + S-adenosyl-L-methionine = 4-amino-2-methyl-5-(phosphooxymethyl)pyrimidine + CO + 5'-deoxyadenosine + formate + L-methionine + 3 H(+). Its pathway is cofactor biosynthesis; thiamine diphosphate biosynthesis. Functionally, catalyzes the synthesis of the hydroxymethylpyrimidine phosphate (HMP-P) moiety of thiamine from aminoimidazole ribotide (AIR) in a radical S-adenosyl-L-methionine (SAM)-dependent reaction. In Rhodopseudomonas palustris (strain HaA2), this protein is Phosphomethylpyrimidine synthase.